The primary structure comprises 548 residues: Chaperonin GroEL (548 aa).

ATP is bound by residues 29–32 (TLGP), 86–90 (DGTTT), glycine 413, 476–478 (NAL), and aspartate 492. Acidic residues predominate over residues 522-531 (PDEDDNDDGD). The tract at residues 522 to 548 (PDEDDNDDGDMGGGAPGMGGMGGMPGM) is disordered. A compositionally biased stretch (gly residues) spans 532-548 (MGGGAPGMGGMGGMPGM).

This sequence belongs to the chaperonin (HSP60) family. Forms a cylinder of 14 subunits composed of two heptameric rings stacked back-to-back. Interacts with the co-chaperonin GroES.

It localises to the cytoplasm. It catalyses the reaction ATP + H2O + a folded polypeptide = ADP + phosphate + an unfolded polypeptide.. Together with its co-chaperonin GroES, plays an essential role in assisting protein folding. The GroEL-GroES system forms a nano-cage that allows encapsulation of the non-native substrate proteins and provides a physical environment optimized to promote and accelerate protein folding. The polypeptide is Chaperonin GroEL (Natranaerobius thermophilus (strain ATCC BAA-1301 / DSM 18059 / JW/NM-WN-LF)).